Here is a 685-residue protein sequence, read N- to C-terminus: UvrABC system protein B (685 aa).

Residues 39–420 form the Helicase ATP-binding domain; sequence EGIGDGLMYQ…TYEAEHQGQV (382 aa). ATP is bound at residue 52-59; sequence GVTGSGKT. A Beta-hairpin motif is present at residues 105 to 128; it reads YYDYYQPEAYVPSRDLFIEKDSSI. Residues 443–596 form the Helicase C-terminal domain; it reads QVDDLLSEAK…QIAFNQANGI (154 aa). Residues 640 to 675 form the UVR domain; it reads AKSIRKLEKEMQEHARNLEFEKAAAARDELFRLRQR.

The protein belongs to the UvrB family. In terms of assembly, forms a heterotetramer with UvrA during the search for lesions. Interacts with UvrC in an incision complex.

The protein localises to the cytoplasm. The UvrABC repair system catalyzes the recognition and processing of DNA lesions. A damage recognition complex composed of 2 UvrA and 2 UvrB subunits scans DNA for abnormalities. Upon binding of the UvrA(2)B(2) complex to a putative damaged site, the DNA wraps around one UvrB monomer. DNA wrap is dependent on ATP binding by UvrB and probably causes local melting of the DNA helix, facilitating insertion of UvrB beta-hairpin between the DNA strands. Then UvrB probes one DNA strand for the presence of a lesion. If a lesion is found the UvrA subunits dissociate and the UvrB-DNA preincision complex is formed. This complex is subsequently bound by UvrC and the second UvrB is released. If no lesion is found, the DNA wraps around the other UvrB subunit that will check the other stand for damage. The chain is UvrABC system protein B from Aromatoleum aromaticum (strain DSM 19018 / LMG 30748 / EbN1) (Azoarcus sp. (strain EbN1)).